Reading from the N-terminus, the 133-residue chain is DNA-directed RNA polymerases I and III subunit RPAC2 (133 aa).

Position 1 is an N-acetylmethionine (Met1).

It belongs to the archaeal Rpo11/eukaryotic RPB11/RPC19 RNA polymerase subunit family. Component of the RNA polymerase I and RNA polymerase III complexes consisting of at least 13 and 17 subunits, respectively. Pol I complex consists of a ten-subunit catalytic core composed of POLR1A/RPA1, POLR1B/RPA2, POLR1C/RPAC1, POLR1D/RPAC2, POLR1H/RPA12, POLR2E/RPABC1, POLR2F/RPABC2, POLR2H/RPABC3, POLR2K/RPABC4 and POLR2L/RPABC5; a mobile stalk subunit POLR1F/RPA43 protruding from the core and additional subunits homologous to general transcription factors POLR1E/RPA49 and POLR1G/RPA34. Part of Pol I pre-initiation complex (PIC), in which Pol I core assembles with RRN3 and promoter-bound UTBF and SL1/TIF-IB complex. Pol III complex consists of a ten-subunit catalytic core composed of POLR3A/RPC1, POLR3B/RPC2, POLR1C/RPAC1, POLR1D/RPAC2, POLR3K/RPC10, POLR2E/RPABC1, POLR2F/RPABC2, POLR2H/RPABC3, POLR2K/RPABC4 and POLR2L/RPABC5; a mobile stalk composed of two subunits POLR3H/RPC8 and CRCP/RPC9, protruding from the core and functioning primarily in transcription initiation; and additional subunits homologous to general transcription factors of the RNA polymerase II machinery, POLR3C/RPC3-POLR3F/RPC6-POLR3G/RPC7 heterotrimer required for transcription initiation and POLR3D/RPC4-POLR3E/RPC5 heterodimer involved in both transcription initiation and termination.

The protein resides in the nucleus. The protein localises to the nucleolus. In terms of biological role, DNA-dependent RNA polymerase catalyzes the transcription of DNA into RNA using the four ribonucleoside triphosphates as substrates. Common component of RNA polymerases I and III which synthesize ribosomal RNA precursors and short non-coding RNAs including 5S rRNA, snRNAs, tRNAs and miRNAs, respectively. This Homo sapiens (Human) protein is DNA-directed RNA polymerases I and III subunit RPAC2.